The following is a 185-amino-acid chain: Ribosome-recycling factor (185 aa).

The protein belongs to the RRF family.

It is found in the cytoplasm. In terms of biological role, responsible for the release of ribosomes from messenger RNA at the termination of protein biosynthesis. May increase the efficiency of translation by recycling ribosomes from one round of translation to another. This chain is Ribosome-recycling factor, found in Macrococcus caseolyticus (strain JCSC5402) (Macrococcoides caseolyticum).